Reading from the N-terminus, the 597-residue chain is Cytosolic Fe-S cluster assembly factor nar1 (597 aa).

Residues Cys-20, Cys-61, Cys-64, Cys-67, Cys-209, and Cys-264 each contribute to the [4Fe-4S] cluster site. The disordered stretch occupies residues 419-447 (PARASRLPGARQSATSAGGSRRQLASRNA). Residues 430–447 (QSATSAGGSRRQLASRNA) show a composition bias toward polar residues. 2 residues coordinate [4Fe-4S] cluster: Cys-464 and Cys-468. A disordered region spans residues 482 to 504 (EAASNMSVESQTEPPEAALKPTP). Positions 485 to 494 (SNMSVESQTE) are enriched in polar residues.

This sequence belongs to the NARF family.

Its function is as follows. Component of the cytosolic Fe/S protein assembly machinery. Required for maturation of extramitochondrial Fe/S proteins. May play a role in the transfer of pre-assembled Fe/S clusters to target apoproteins. The chain is Cytosolic Fe-S cluster assembly factor nar1 (nar1) from Aspergillus clavatus (strain ATCC 1007 / CBS 513.65 / DSM 816 / NCTC 3887 / NRRL 1 / QM 1276 / 107).